The following is a 189-amino-acid chain: dCTP deaminase (189 aa).

DCTP is bound by residues 112–117 (KSTYAR), 136–138 (TLE), Gln157, Tyr171, and Gln181. Glu138 (proton donor/acceptor) is an active-site residue.

Belongs to the dCTP deaminase family. As to quaternary structure, homotrimer.

It carries out the reaction dCTP + H2O + H(+) = dUTP + NH4(+). The protein operates within pyrimidine metabolism; dUMP biosynthesis; dUMP from dCTP (dUTP route): step 1/2. Catalyzes the deamination of dCTP to dUTP. The chain is dCTP deaminase from Acinetobacter baylyi (strain ATCC 33305 / BD413 / ADP1).